The following is a 103-amino-acid chain: Co-chaperonin GroES (103 aa).

It belongs to the GroES chaperonin family. In terms of assembly, heptamer of 7 subunits arranged in a ring. Interacts with the chaperonin GroEL.

The protein resides in the cytoplasm. Its function is as follows. Together with the chaperonin GroEL, plays an essential role in assisting protein folding. The GroEL-GroES system forms a nano-cage that allows encapsulation of the non-native substrate proteins and provides a physical environment optimized to promote and accelerate protein folding. GroES binds to the apical surface of the GroEL ring, thereby capping the opening of the GroEL channel. This chain is Co-chaperonin GroES, found in Crocosphaera subtropica (strain ATCC 51142 / BH68) (Cyanothece sp. (strain ATCC 51142)).